We begin with the raw amino-acid sequence, 220 residues long: Uracil-DNA glycosylase (220 aa).

The Proton acceptor role is filled by D65.

This sequence belongs to the uracil-DNA glycosylase (UDG) superfamily. UNG family.

The protein localises to the cytoplasm. It catalyses the reaction Hydrolyzes single-stranded DNA or mismatched double-stranded DNA and polynucleotides, releasing free uracil.. Excises uracil residues from the DNA which can arise as a result of misincorporation of dUMP residues by DNA polymerase or due to deamination of cytosine. The polypeptide is Uracil-DNA glycosylase (Azobacteroides pseudotrichonymphae genomovar. CFP2).